A 197-amino-acid chain; its full sequence is Superoxide dismutase [Fe] (197 aa).

Fe cation is bound by residues His-26, His-75, Asp-157, and His-161.

It belongs to the iron/manganese superoxide dismutase family. As to quaternary structure, homotetramer. It depends on Fe cation as a cofactor.

The enzyme catalyses 2 superoxide + 2 H(+) = H2O2 + O2. Its function is as follows. Destroys superoxide anion radicals which are normally produced within the cells and which are toxic to biological systems. The protein is Superoxide dismutase [Fe] of Cupriavidus metallidurans (strain ATCC 43123 / DSM 2839 / NBRC 102507 / CH34) (Ralstonia metallidurans).